The primary structure comprises 353 residues: Photosystem II D2 protein (353 aa).

Thr2 carries the N-acetylthreonine modification. A Phosphothreonine modification is found at Thr2. Residues 41 to 61 form a helical membrane-spanning segment; it reads CAYFALGGWFTGTTFVTSWYT. His118 serves as a coordination point for chlorophyll a. The helical transmembrane segment at 125–141 threads the bilayer; that stretch reads GFMLRQFELARSVQLRP. Pheophytin a-binding residues include Gln130 and Asn143. A helical membrane pass occupies residues 153–166; the sequence is VFVSVFLIYPLGQS. Residue His198 participates in chlorophyll a binding. A helical membrane pass occupies residues 208-228; that stretch reads AALLCAIHGATVENTLFEDGD. A plastoquinone is bound by residues His215 and Phe262. A Fe cation-binding site is contributed by His215. Residue His269 participates in Fe cation binding. Residues 279-295 traverse the membrane as a helical segment; it reads GLWMSALGVVGLALNLR.

Belongs to the reaction center PufL/M/PsbA/D family. PSII is composed of 1 copy each of membrane proteins PsbA, PsbB, PsbC, PsbD, PsbE, PsbF, PsbH, PsbI, PsbJ, PsbK, PsbL, PsbM, PsbT, PsbX, PsbY, PsbZ, Psb30/Ycf12, at least 3 peripheral proteins of the oxygen-evolving complex and a large number of cofactors. It forms dimeric complexes. Interacts with PAM68. It depends on The D1/D2 heterodimer binds P680, chlorophylls that are the primary electron donor of PSII, and subsequent electron acceptors. It shares a non-heme iron and each subunit binds pheophytin, quinone, additional chlorophylls, carotenoids and lipids. There is also a Cl(-1) ion associated with D1 and D2, which is required for oxygen evolution. The PSII complex binds additional chlorophylls, carotenoids and specific lipids. as a cofactor. Post-translationally, phosphorylation occurs in normal plant growth light conditions. Rapid dephosphorylation occurs during heat shock.

The protein resides in the plastid. It is found in the chloroplast thylakoid membrane. The catalysed reaction is 2 a plastoquinone + 4 hnu + 2 H2O = 2 a plastoquinol + O2. In terms of biological role, photosystem II (PSII) is a light-driven water:plastoquinone oxidoreductase that uses light energy to abstract electrons from H(2)O, generating O(2) and a proton gradient subsequently used for ATP formation. It consists of a core antenna complex that captures photons, and an electron transfer chain that converts photonic excitation into a charge separation. The D1/D2 (PsbA/PsbD) reaction center heterodimer binds P680, the primary electron donor of PSII as well as several subsequent electron acceptors. D2 is needed for assembly of a stable PSII complex. This is Photosystem II D2 protein from Arabidopsis thaliana (Mouse-ear cress).